The following is a 332-amino-acid chain: Glycerol-3-phosphate dehydrogenase [NAD(P)+] 2 (332 aa).

NADPH contacts are provided by Ser-17, Trp-18, Arg-37, and Lys-112. Sn-glycerol 3-phosphate is bound by residues Lys-112 and Gly-140. An NADPH-binding site is contributed by Ala-144. Residues Lys-195, Asp-243, Ser-253, Arg-254, and Asn-255 each contribute to the sn-glycerol 3-phosphate site. Catalysis depends on Lys-195, which acts as the Proton acceptor. Arg-254 is an NADPH binding site. NADPH is bound by residues Val-278 and Glu-280.

The protein belongs to the NAD-dependent glycerol-3-phosphate dehydrogenase family.

It is found in the cytoplasm. The catalysed reaction is sn-glycerol 3-phosphate + NAD(+) = dihydroxyacetone phosphate + NADH + H(+). It catalyses the reaction sn-glycerol 3-phosphate + NADP(+) = dihydroxyacetone phosphate + NADPH + H(+). Its pathway is membrane lipid metabolism; glycerophospholipid metabolism. Catalyzes the reduction of the glycolytic intermediate dihydroxyacetone phosphate (DHAP) to sn-glycerol 3-phosphate (G3P), the key precursor for phospholipid synthesis. This chain is Glycerol-3-phosphate dehydrogenase [NAD(P)+] 2, found in Mycolicibacterium paratuberculosis (strain ATCC BAA-968 / K-10) (Mycobacterium paratuberculosis).